The following is a 531-amino-acid chain: Splicing factor ESS-2 (531 aa).

Disordered regions lie at residues 104-163 and 453-531; these read RTPI…RKKK and PFAS…GDFF. Positions 105–114 are enriched in polar residues; sequence TPITTRSTTE. 2 stretches are compositionally biased toward low complexity: residues 125-136 and 464-477; these read TPGPSSASTSSA and SRPS…TPGS. Polar residues predominate over residues 480 to 498; sequence SRGSTTPGSSWSQGAQTPG.

Belongs to the ESS2 family.

It localises to the nucleus. Regulates pre-mRNA splicing. In Caenorhabditis elegans, this protein is Splicing factor ESS-2 (ess-2).